The sequence spans 232 residues: MAKLGKRTRAAREAFAGKSNLTIEEAVALVKANATTKFDETVEIAMNLGVDTRHADQMVRGVVGLPNGTGKTMRVAVFARGPKADEAKEAGADIVGAEDLMETIQGGTIDFDRCIATPDMMPVVGRLGKVLGPRNLMPNPKVGTVTMDVKAAVEAAKGGEVQFKAEKGGVVHAGVGKASFDEAKLVENVRAFVSAVAKAKPSGAKGAYMKKIVLSSTMGPGVTLDVDGAVSE.

The protein belongs to the universal ribosomal protein uL1 family. In terms of assembly, part of the 50S ribosomal subunit.

Its function is as follows. Binds directly to 23S rRNA. The L1 stalk is quite mobile in the ribosome, and is involved in E site tRNA release. Protein L1 is also a translational repressor protein, it controls the translation of the L11 operon by binding to its mRNA. This is Large ribosomal subunit protein uL1 from Ruegeria sp. (strain TM1040) (Silicibacter sp.).